Reading from the N-terminus, the 297-residue chain is MRVLDEIAESPFLISPLNPNSTANGYRWVDKCHGFLHNTVLVAASLFFVAYLAYEAKKSLSKLSNRRSYIMIAYYGCLWLVSLLNLAWCCLQGWECTPGKEVVWNLLTLFTTSGMLFLEVSLVAFLFQGNYASGAEALTRTFLISGFIVALDLLLKAIFLFGFGVPLFIDNNENGKTFKWGLWIIHKLLLTGVYGMVFLMYNSRWREKLPARPAFYNYIIIMFALYSLYLVASAFTANNAHFGFWLYGIMSVCYHALYLPLLYITFLADFFQEEDLNLENVYYSEMKDAGFFDSDWE.

N-linked (GlcNAc...) asparagine glycosylation occurs at N20. The next 7 helical transmembrane spans lie at 34–54 (GFLH…YLAY), 70–90 (IMIA…AWCC), 107–127 (LTLF…AFLF), 142–162 (FLIS…FLFG), 180–200 (WGLW…VFLM), 215–235 (FYNY…ASAF), and 242–262 (FGFW…LPLL).

It belongs to the UPF0359 family.

Its subcellular location is the membrane. G-protein coupled receptor. Plays a role in plants and microbes interactions. This chain is Protein CANDIDATE G-PROTEIN COUPLED RECEPTOR 8, found in Arabidopsis thaliana (Mouse-ear cress).